Consider the following 417-residue polypeptide: Serine hydroxymethyltransferase 4 (417 aa).

Residues Leu-121 and 125–127 each bind (6S)-5,6,7,8-tetrahydrofolate; that span reads GHL. Lys-230 is subject to N6-(pyridoxal phosphate)lysine. 355-357 lines the (6S)-5,6,7,8-tetrahydrofolate pocket; sequence SPF.

It belongs to the SHMT family. In terms of assembly, homodimer. The cofactor is pyridoxal 5'-phosphate.

Its subcellular location is the cytoplasm. The enzyme catalyses (6R)-5,10-methylene-5,6,7,8-tetrahydrofolate + glycine + H2O = (6S)-5,6,7,8-tetrahydrofolate + L-serine. The protein operates within one-carbon metabolism; tetrahydrofolate interconversion. It functions in the pathway amino-acid biosynthesis; glycine biosynthesis; glycine from L-serine: step 1/1. Its function is as follows. Catalyzes the reversible interconversion of serine and glycine with tetrahydrofolate (THF) serving as the one-carbon carrier. This reaction serves as the major source of one-carbon groups required for the biosynthesis of purines, thymidylate, methionine, and other important biomolecules. Also exhibits THF-independent aldolase activity toward beta-hydroxyamino acids, producing glycine and aldehydes, via a retro-aldol mechanism. This is Serine hydroxymethyltransferase 4 from Colwellia psychrerythraea (strain 34H / ATCC BAA-681) (Vibrio psychroerythus).